The primary structure comprises 208 residues: uncharacterized protein (208 aa).

This is an uncharacterized protein from Caenorhabditis elegans.